Consider the following 395-residue polypeptide: Thyroid hormone receptor beta (395 aa).

The interval 1 to 31 is modulating; sequence MSEPAENCSPRWKDEAIQNGYIPSYLDKDEL. Zn(2+)-binding residues include Cys-32, Cys-35, Cys-49, Cys-52, Cys-70, Cys-76, Cys-86, and Cys-89. 2 consecutive NR C4-type zinc fingers follow at residues 32-52 and 70-94; these read CVVC…CEGC and CKYE…FKKC. Residues 32–99 constitute a DNA-binding region (nuclear receptor); sequence CVVCGDKATG…RFKKCIAVGM (68 aa). The region spanning 142-395 is the NR LBD domain; it reads EEWDLIRMVT…PPLFLEVFED (254 aa). Residues Arg-216, Asn-265, and His-369 each contribute to the 3,3',5-triiodo-L-thyronine site. The L-thyroxine site is built by Arg-216, Asn-265, and His-369.

The protein belongs to the nuclear hormone receptor family. NR1 subfamily.

It localises to the nucleus. Nuclear hormone receptor that can act as a repressor or activator of transcription. High affinity receptor for thyroid hormones, including triiodothyronine and thyroxine. The polypeptide is Thyroid hormone receptor beta (thrb) (Paralichthys olivaceus (Bastard halibut)).